The following is a 370-amino-acid chain: Heme A synthase (370 aa).

Transmembrane regions (helical) follow at residues 15–35, 104–124, 129–149, 161–181, 200–220, 261–280, 293–313, and 317–337; these read VRIWLTLVAALIAVMVLVGGA, VIGIVYLLPFLWFLWRGAIGP, ALWIIFALGALQGAVGWWMVA, VRLATHLSLALIIYAAIVWTL, ALALLGLTFVQLYAGALVAGL, QFDHRMLAYALWTLAALHMI, GAVLLFLALTVQAALGIFTVL, and PIDLALAHQAMALVVLTLAVL. Position 264 (H264) interacts with heme. Position 324 (H324) interacts with heme.

This sequence belongs to the COX15/CtaA family. Type 2 subfamily. As to quaternary structure, interacts with CtaB. Requires heme b as cofactor.

It localises to the cell membrane. The enzyme catalyses Fe(II)-heme o + 2 A + H2O = Fe(II)-heme a + 2 AH2. The protein operates within porphyrin-containing compound metabolism; heme A biosynthesis; heme A from heme O: step 1/1. Its function is as follows. Catalyzes the conversion of heme O to heme A by two successive hydroxylations of the methyl group at C8. The first hydroxylation forms heme I, the second hydroxylation results in an unstable dihydroxymethyl group, which spontaneously dehydrates, resulting in the formyl group of heme A. This is Heme A synthase from Rhodopseudomonas palustris (strain TIE-1).